The sequence spans 227 residues: Phosphoribosylformylglycinamidine synthase subunit PurQ (227 aa).

Residues 3-225 (FAVIVFPGSN…LKQWRETYVV (223 aa)) enclose the Glutamine amidotransferase type-1 domain. Cys86 acts as the Nucleophile in catalysis. Active-site residues include His194 and Glu196.

Part of the FGAM synthase complex composed of 1 PurL, 1 PurQ and 2 PurS subunits.

It is found in the cytoplasm. It carries out the reaction N(2)-formyl-N(1)-(5-phospho-beta-D-ribosyl)glycinamide + L-glutamine + ATP + H2O = 2-formamido-N(1)-(5-O-phospho-beta-D-ribosyl)acetamidine + L-glutamate + ADP + phosphate + H(+). The enzyme catalyses L-glutamine + H2O = L-glutamate + NH4(+). The protein operates within purine metabolism; IMP biosynthesis via de novo pathway; 5-amino-1-(5-phospho-D-ribosyl)imidazole from N(2)-formyl-N(1)-(5-phospho-D-ribosyl)glycinamide: step 1/2. Its function is as follows. Part of the phosphoribosylformylglycinamidine synthase complex involved in the purines biosynthetic pathway. Catalyzes the ATP-dependent conversion of formylglycinamide ribonucleotide (FGAR) and glutamine to yield formylglycinamidine ribonucleotide (FGAM) and glutamate. The FGAM synthase complex is composed of three subunits. PurQ produces an ammonia molecule by converting glutamine to glutamate. PurL transfers the ammonia molecule to FGAR to form FGAM in an ATP-dependent manner. PurS interacts with PurQ and PurL and is thought to assist in the transfer of the ammonia molecule from PurQ to PurL. The chain is Phosphoribosylformylglycinamidine synthase subunit PurQ from Bacillus anthracis (strain A0248).